The chain runs to 56 residues: Botcinic acid biosynthesis cluster B protein 14 (56 aa).

The protein operates within polyketide biosynthesis. Part of the gene cluster B that mediates the biosynthesis of botcinic acid and its botcinin derivatives, acetate-derived polyketides that contribute to virulence when combined with the sesquiterpene botrydial. Botcinic acid and its derivatives have been shown to induce chlorosis and necrosis during host plant infection, but also have antifungal activities. Two polyketide synthases, BOA6 and BOA9, are involved in the biosynthesis of botcinins. BOA6 mediates the formation of the per-methylated tetraketide core by condensation of four units of malonyl-CoA with one unit of acetyl-CoA, which would be methylated in activated methylene groups to yield a bicyclic acid intermediate that could then either be converted to botrylactone derivatives or lose the starter acetate unit through a retro-Claisen type C-C bond cleavage to yield botcinin derivatives. The second polyketide synthase, BOA9, is probably required for the biosynthesis of the tetraketide side chain of botcinins. The methyltransferase (MT) domain within BOA6 is probably responsible for the incorporation of four methyl groups. The trans-enoyl reductase BOA5 might take over the enoyl reductase function of BOA6 that misses an ER domain. The monooxygenases BOA2, BOA3 and BOA4 might be involved in further hydroxylations at C4, C5 and C8, whereas BOA7, close to BOA9, could potentially be involved in the hydroxylation at C4 in the side chain of botcinins. The protein is Botcinic acid biosynthesis cluster B protein 14 of Botryotinia fuckeliana (strain B05.10) (Noble rot fungus).